A 378-amino-acid polypeptide reads, in one-letter code: Apolipoprotein A-IV (378 aa).

Residues 1–20 (MFLKAVVLTLSLVAITGARA) form the signal peptide. 13 repeat units span residues 33–54 (DYFSQLSNNAKEAVEHLQQSEL), 60–81 (SVTKGHISALRVIEKGRERNSW), 82–98 (EHSRRVGPCEIMGRQVG), 110–130 (PNCDLPVNSVPPNTHLSQAVG), 131–152 (PYAEELRTQVNTHAEQLRNQLT), 153–174 (SHAQRMQSALRQNVDDLHSSLT), 175–196 (PFADELKAKIDQNVEELKGHLT), 197–218 (PYTDELKVKIDQNVEELRRSLA), 219–240 (PYAQDVQEKLNHQLEGLAFQMK), 241–262 (KNAEELKAKISANAEELRQRLA), 263–280 (PVAEDVRGKLKDNTAGLH), 281–302 (KSLAELSSRLDQQVEEFRRNVG), and 303–324 (PYGETFNKALLQQVEELRQKLG). Residues 33 to 324 (DYFSQLSNNA…QVEELRQKLG (292 aa)) are 13 X 22 AA approximate tandem repeats. The segment at 354–378 (EKESQDTPVALPKQEQEQSAVPLES) is disordered.

This sequence belongs to the apolipoprotein A1/A4/E family. As to quaternary structure, homodimer.

The protein localises to the secreted. Functionally, may have a role in chylomicrons and VLDL secretion and catabolism. Required for efficient activation of lipoprotein lipase by ApoC-II; potent activator of LCAT. Apoa-IV is a major component of HDL and chylomicrons. The sequence is that of Apolipoprotein A-IV from Canis lupus familiaris (Dog).